A 276-amino-acid chain; its full sequence is F-actin-capping protein subunit beta (276 aa).

This sequence belongs to the F-actin-capping protein beta subunit family. In terms of assembly, component of the F-actin capping complex, composed of a heterodimer of an alpha and a beta subunit. Subunit of dynactin, a multiprotein complex part of a tripartite complex with dynein and a adapter, such as BICDL1, BICD2 or HOOK3.

It is found in the cytoplasm. It localises to the cytoskeleton. In terms of biological role, F-actin-capping proteins bind in a Ca(2+)-independent manner to the fast growing ends of actin filaments (barbed end) thereby blocking the exchange of subunits at these ends. Unlike other capping proteins (such as gelsolin and severin), these proteins do not sever actin filaments. Forms, with CAPZB, the barbed end of the fast growing ends of actin filaments in the dynactin complex and stabilizes dynactin structure. The dynactin multiprotein complex activates the molecular motor dynein for ultra-processive transport along microtubules. This chain is F-actin-capping protein subunit beta (cpb), found in Drosophila melanogaster (Fruit fly).